We begin with the raw amino-acid sequence, 312 residues long: Ribosomal protein L11 methyltransferase (312 aa).

4 residues coordinate S-adenosyl-L-methionine: Thr163, Gly184, Asp206, and Asn248.

The protein belongs to the methyltransferase superfamily. PrmA family.

The protein resides in the cytoplasm. It catalyses the reaction L-lysyl-[protein] + 3 S-adenosyl-L-methionine = N(6),N(6),N(6)-trimethyl-L-lysyl-[protein] + 3 S-adenosyl-L-homocysteine + 3 H(+). In terms of biological role, methylates ribosomal protein L11. The polypeptide is Ribosomal protein L11 methyltransferase (Clostridium botulinum (strain Okra / Type B1)).